The sequence spans 55 residues: Large ribosomal subunit protein bL33 (55 aa).

This sequence belongs to the bacterial ribosomal protein bL33 family.

This Cereibacter sphaeroides (strain ATCC 17029 / ATH 2.4.9) (Rhodobacter sphaeroides) protein is Large ribosomal subunit protein bL33.